The primary structure comprises 454 residues: Chromosomal replication initiator protein DnaA (454 aa).

The tract at residues 1 to 71 is domain I, interacts with DnaA modulators; the sequence is MTKEQWGQLQ…HEVRQEDPAV (71 aa). Positions 71–112 are domain II; it reads VRRLRFAVPSHVNATTKPARPAQATAPRAPAEKTPRSTLSTA. The segment at 82 to 108 is disordered; sequence VNATTKPARPAQATAPRAPAEKTPRST. The segment covering 84–99 has biased composition (low complexity); it reads ATTKPARPAQATAPRA. Residues 113–334 form a domain III, AAA+ region region; the sequence is PLDARFTFDN…GALTRLCAFA (222 aa). 4 residues coordinate ATP: G157, G159, K160, and T161. The interval 335 to 454 is domain IV, binds dsDNA; sequence SLVGREIDME…LELLRRALEE (120 aa).

Belongs to the DnaA family. In terms of assembly, oligomerizes as a right-handed, spiral filament on DNA at oriC.

It is found in the cytoplasm. In terms of biological role, plays an essential role in the initiation and regulation of chromosomal replication. ATP-DnaA binds to the origin of replication (oriC) to initiate formation of the DNA replication initiation complex once per cell cycle. Binds the DnaA box (a 9 base pair repeat at the origin) and separates the double-stranded (ds)DNA. Forms a right-handed helical filament on oriC DNA; dsDNA binds to the exterior of the filament while single-stranded (ss)DNA is stabiized in the filament's interior. The ATP-DnaA-oriC complex binds and stabilizes one strand of the AT-rich DNA unwinding element (DUE), permitting loading of DNA polymerase. After initiation quickly degrades to an ADP-DnaA complex that is not apt for DNA replication. Binds acidic phospholipids. This Roseobacter denitrificans (strain ATCC 33942 / OCh 114) (Erythrobacter sp. (strain OCh 114)) protein is Chromosomal replication initiator protein DnaA.